The following is a 911-amino-acid chain: Desmoglein-1-gamma (911 aa).

The signal sequence occupies residues 1-23; that stretch reads MDWHSFRIAALLLTSLVVLEVNS. A propeptide spanning residues 24-49 is cleaved from the precursor; that stretch reads EFQIQVRDHNAKNGTIKWHSIRRQKR. Cadherin domains are found at residues 50–157, 158–269, and 270–389; these read EWIK…PPVF, SMTT…IPYL, and EQSS…QPGS. Residues 50-519 lie on the Extracellular side of the membrane; sequence EWIKFAAACR…PNVDNVHFGP (470 aa). The N-linked (GlcNAc...) (high mannose) asparagine glycan is linked to N110. N180 carries N-linked (GlcNAc...) asparagine glycosylation. An N-linked (GlcNAc...) asparagine glycan is attached at N401. A helical transmembrane segment spans residues 520–540; that stretch reads AGIGLLIMGFLVLGLVPFLLI. Residues 541 to 911 lie on the Cytoplasmic side of the membrane; it reads SCDCGGAPGG…GMIGNLSIPP (371 aa). Desmoglein repeat repeat units follow at residues 783–809, 810–839, 840–869, and 870–897; these read AYPS…TVRE, SYTT…ERVV, GPIS…ERVI, and APGS…ERVI. Residues 898 to 911 form a Desmoglein repeat 5; truncated repeat; sequence QPTSGMIGNLSIPP.

In terms of assembly, interacts with DSC3; there is evidence to suggest that the interaction promotes cell-cell adhesion of keratinocytes. In terms of tissue distribution, expressed in epidermis, brain, liver, skeletal, muscle and testis.

The protein resides in the cell membrane. It localises to the cell junction. The protein localises to the desmosome. It is found in the cytoplasm. Its subcellular location is the nucleus. Its function is as follows. Component of intercellular desmosome junctions. Involved in the interaction of plaque proteins and intermediate filaments mediating cell-cell adhesion. This Mus musculus (Mouse) protein is Desmoglein-1-gamma (Dsg1c).